Reading from the N-terminus, the 263-residue chain is Indole-3-glycerol phosphate synthase (263 aa).

Belongs to the TrpC family.

The catalysed reaction is 1-(2-carboxyphenylamino)-1-deoxy-D-ribulose 5-phosphate + H(+) = (1S,2R)-1-C-(indol-3-yl)glycerol 3-phosphate + CO2 + H2O. Its pathway is amino-acid biosynthesis; L-tryptophan biosynthesis; L-tryptophan from chorismate: step 4/5. The protein is Indole-3-glycerol phosphate synthase of Rhodospirillum rubrum (strain ATCC 11170 / ATH 1.1.1 / DSM 467 / LMG 4362 / NCIMB 8255 / S1).